Here is a 430-residue protein sequence, read N- to C-terminus: Small ribosomal subunit protein uS5m (430 aa).

The segment at 108 to 128 (AGARKGRGKRTKRKRRKDLNR) is disordered. Residues 111–125 (RKGRGKRTKRKRRKD) are compositionally biased toward basic residues. The S5 DRBM domain maps to 218–282 (FDTRILEVRN…NRAVHYLHYI (65 aa)).

It belongs to the universal ribosomal protein uS5 family. Component of the mitochondrial ribosome small subunit (28S) which comprises a 12S rRNA and about 30 distinct proteins.

Its subcellular location is the mitochondrion. The chain is Small ribosomal subunit protein uS5m (MRPS5) from Bos taurus (Bovine).